The primary structure comprises 169 residues: Der GTPase-activating protein YihI (169 aa).

Disordered regions lie at residues 1-75 (MKPS…IPLG) and 144-169 (GLSY…LRGN). Over residues 10 to 19 (SKGHAKARRK) the composition is skewed to basic residues. Positions 20–30 (TREELDQEARD) are enriched in basic and acidic residues. The segment covering 31–40 (RKRQKKRRGH) has biased composition (basic residues). Over residues 49–58 (GNTTSGSKGQ) the composition is skewed to polar residues. Residues 147 to 159 (YDDDEEEEEDEKQ) show a composition bias toward acidic residues. Residues 160 to 169 (EDMMRLLRGN) are compositionally biased toward basic and acidic residues.

The protein belongs to the YihI family. As to quaternary structure, interacts with Der.

A GTPase-activating protein (GAP) that modifies Der/EngA GTPase function. May play a role in ribosome biogenesis. The sequence is that of Der GTPase-activating protein YihI from Escherichia coli (strain 55989 / EAEC).